Here is a 170-residue protein sequence, read N- to C-terminus: Small ribosomal subunit protein uS9 (170 aa).

The protein belongs to the universal ribosomal protein uS9 family.

The sequence is that of Small ribosomal subunit protein uS9 from Rhodococcus opacus (strain B4).